The sequence spans 292 residues: Glycine-rich RNA-binding protein RZ1B (292 aa).

In terms of domain architecture, RRM spans 12-90 (SRIFVGGLSW…KVISVNKAEP (79 aa)). At S20 the chain carries Phosphoserine. Residues 93–114 (GGEDVDQLKKGGGYSSRGKGTE) form a disordered region. Residues 117 to 132 (CFKCRRPGHWARDCPS) form a CCHC-type zinc finger. Basic and acidic residues-rich tracts occupy residues 180–210 (DGRRDRDGGRYSYRDRFDSGDKYEPRDHYPF) and 220–268 (FVSD…EGRP). Residues 180-292 (DGRRDRDGGR…GGRPSSYERW (113 aa)) form a disordered region.

Expressed in roots, rosette and cauline leaves, stems, floral buds and flowers.

It is found in the nucleus. Its function is as follows. Binds RNA and DNA sequences non-specifically. May be involved in tolerance to cold stress. The chain is Glycine-rich RNA-binding protein RZ1B from Arabidopsis thaliana (Mouse-ear cress).